The following is a 548-amino-acid chain: MKMKMKLASFGLAAGLAAQVFLPYNALASTEHVTWNQQFQTPQFISGDLLKVNGTSPEELVYQYVEKNENKFKFHENAKDTLQLKEKKNDNLGFTFMRFQQTYKGIPVFGAVVTSHVKDGTLTALSGTLIPNLDTKGSLKSGKKLSEKQARDIAEKDLVANVTKEVPEYEQGKDTEFVVYVNGDEASLAYVVNLNFLTPEPGNWLYIIDAVDGKILNKFNQLDAAKPGDVKSITGTSTVGVGRGVLGDQKNINTTYSTYYYLQDNTRGNGIFTYDAKYRTTLPGSLWADADNQFFASYDAPAVDAHYYAGVTYDYYKNVHNRLSYDGNNAAIRSSVHYSQGYNNAFWNGSQMVYGDGDGQTFIPLSGGIDVVAHELTHAVTDYTAGLIYQNESGAINEAISDIFGTLVEFYANKNPDWEIGEDVYTPGISGDSLRSMSDPAKYGDPDHYSKRYTGTQDNGGVHINSGIINKAAYLISQGGTHYGVSVVGIGRDKLGKIFYRALTQYLTPTSNFSQLRAAAVQSATDLYGSTSQEVASVKQAFDAVGVK.

Residues 1 to 28 (MKMKMKLASFGLAAGLAAQVFLPYNALA) form the signal peptide. Residues 29–232 (STEHVTWNQQ…DAAKPGDVKS (204 aa)) constitute a propeptide, activation peptide. Residues aspartate 289, aspartate 291, glutamine 293, and aspartate 370 each coordinate Ca(2+). A Zn(2+)-binding site is contributed by histidine 374. The active site involves glutamate 375. 2 residues coordinate Zn(2+): histidine 378 and glutamate 398. Residues glutamate 409, asparagine 415, aspartate 417, glutamate 419, glutamate 422, tyrosine 425, threonine 426, isoleucine 429, and aspartate 432 each coordinate Ca(2+). Histidine 463 acts as the Proton donor in catalysis.

The protein belongs to the peptidase M4 family. The cofactor is Ca(2+). Zn(2+) is required as a cofactor.

The protein localises to the secreted. It carries out the reaction Preferential cleavage: Xaa-|-Leu &gt; Xaa-|-Phe.. Functionally, extracellular zinc metalloprotease. In Bacillus thermoproteolyticus, this protein is Thermolysin (npr).